A 313-amino-acid chain; its full sequence is Protein FixB (313 aa).

255–283 (LYLAVGISGQIQHMVGANASQTIFAINKD) provides a ligand contact to FAD.

This sequence belongs to the ETF alpha-subunit/FixB family. Heterodimer of FixA and FixB.

It participates in amine and polyamine metabolism; carnitine metabolism. Functionally, required for anaerobic carnitine reduction. May bring reductant to CaiA. The sequence is that of Protein FixB from Shigella dysenteriae serotype 1 (strain Sd197).